Reading from the N-terminus, the 355-residue chain is MGTYLSSPKTEKLSEDGENDKLRFGLSSMQGWRATMEDAHAAILDLDDKTSFFGVYDGHGGKVVAKFCAKYLHQQVISNEAYKTGDVETSLRRAFFRMDDMMQGQRGWRELAVLGDKMNKFSGMIEGFIWSPRSGDTNNQPDSWPLEDGPHSDFTGPTSGCTACVALIKDKKLFVANAGDSRCVISRKSQAYNLSKDHKPDLEVEKERILKAGGFIHAGRINGSLNLTRAIGDMEFKQNKFLPSEKQMVTADPDINTIDLCDDDDFLVVACDGIWDCMSSQELVDFIHEQLKSETKLSTVCEKVVDRCLAPDTATGEGCDNMTIILVQFKKPNPSETEPEDSKPEPSEDEPSSSS.

One can recognise a PPM-type phosphatase domain in the interval 23-329 (RFGLSSMQGW…DNMTIILVQF (307 aa)). Mn(2+) contacts are provided by aspartate 57, glycine 58, aspartate 272, and aspartate 320. The disordered stretch occupies residues 329 to 355 (FKKPNPSETEPEDSKPEPSEDEPSSSS).

This sequence belongs to the PP2C family. The cofactor is Mg(2+). Requires Mn(2+) as cofactor.

The catalysed reaction is O-phospho-L-seryl-[protein] + H2O = L-seryl-[protein] + phosphate. It carries out the reaction O-phospho-L-threonyl-[protein] + H2O = L-threonyl-[protein] + phosphate. The polypeptide is Probable protein phosphatase 2C 21 (PPC4-2) (Arabidopsis thaliana (Mouse-ear cress)).